A 174-amino-acid polypeptide reads, in one-letter code: MTTIVSVRRNNQVVIAGDGQVSLGNTVMKGNARKVRRLYHNKVLAGFAGGTADAFTLFERFEAKLEMHQGHLLKSAVELAKDWRSDKMLRKLEAMLVVADTESSLIITGNGDVVQPEYDLIAIGSGGNYAHASALALLQNTELSAEEIAEKSLTIAGDICVFTNQFKTIEKLDY.

Residue T2 is part of the active site. Residues G157, C160, and T163 each contribute to the Na(+) site.

Belongs to the peptidase T1B family. HslV subfamily. A double ring-shaped homohexamer of HslV is capped on each side by a ring-shaped HslU homohexamer. The assembly of the HslU/HslV complex is dependent on binding of ATP.

The protein resides in the cytoplasm. The catalysed reaction is ATP-dependent cleavage of peptide bonds with broad specificity.. With respect to regulation, allosterically activated by HslU binding. Protease subunit of a proteasome-like degradation complex believed to be a general protein degrading machinery. This chain is ATP-dependent protease subunit HslV, found in Shewanella frigidimarina (strain NCIMB 400).